Reading from the N-terminus, the 272-residue chain is MSSQELVTLNVGGKIFTTRFSTIKQFPASRLARMLDGRDQEFKMVGGQIFVDRDGDLFSFILDFLRTHQLLLPTEFSDYLRLQREALFYELRSLVDLLNPYLLQPRPALVEVHFLSRNTQAFFRVFGSCSKTIEMLTGRITVFTEQPSAPTWNGNFFPPQMTLLPLPPQRPSYHDLVFQCGSDSTTDNQTGVRYVSIKPDNRKLANGTNVLGLLIDTLLKEGFHLVSTRTVSSEDKTECYSFERIKSPEVLITNETPKPETIIIPEQSQIKK.

A BTB domain is found at 5–106; sequence ELVTLNVGGK…LLNPYLLQPR (102 aa).

As to quaternary structure, can form homooligomers. Interacts with KCNA1 (via cytoplasmic N-terminal domain) and KCNA4. Ubiquitous in normal tissues and expressed in some tumor tissues.

It localises to the endoplasmic reticulum. Inhibits potassium fluxes in cells. May regulate Kv1 family channel proteins by retaining a fraction of channels in endomembranes. The protein is Potassium channel regulatory protein (KCNRG) of Homo sapiens (Human).